Here is a 92-residue protein sequence, read N- to C-terminus: DNA-directed RNA polymerase subunit omega (92 aa).

The protein belongs to the RNA polymerase subunit omega family. The RNAP catalytic core consists of 2 alpha, 1 beta, 1 beta' and 1 omega subunit. When a sigma factor is associated with the core the holoenzyme is formed, which can initiate transcription.

It carries out the reaction RNA(n) + a ribonucleoside 5'-triphosphate = RNA(n+1) + diphosphate. Functionally, promotes RNA polymerase assembly. Latches the N- and C-terminal regions of the beta' subunit thereby facilitating its interaction with the beta and alpha subunits. In Shewanella amazonensis (strain ATCC BAA-1098 / SB2B), this protein is DNA-directed RNA polymerase subunit omega.